A 596-amino-acid polypeptide reads, in one-letter code: Glomulin (596 aa).

A2 carries the post-translational modification N-acetylalanine. The alpha-helical region with structural similarity to HEAT repeats stretch occupies residues 2 to 555 (AVEELQSIIK…EEIPSMPPEM (554 aa)). Residues 299–596 (IDQLPMVLSP…STSEENVGIK (298 aa)) are important for interaction with RBX1.

Interacts with FKBP4 and FKBP1A. Interacts with RBX1 (via RING domain). Identified in complexes that contain RBX1 plus one of the cullins CUL1, CUL2, CUL3, and CUL4A. Identified in a SCF complex composed of CUL1, RBX1, SKP1, FBXW7 and GLMN. Component of a SCF-like complex consisting of CUL7, RBX1, SKP1, FBXW8 and GLMN. Interacts with unphosphorylated MET and is released upon MET phosphorylation. Phosphorylated on tyrosine residues. In terms of tissue distribution, ubiquitous. Detected in embryonic vasculature and embryonic perichondrium, and in adult eye, brain, heart, testis, kidney, smooth muscle and skeletal muscle.

Regulatory component of cullin-RING-based SCF (SKP1-Cullin-F-box protein) E3 ubiquitin-protein ligase complexes. Inhibits E3 ubiquitin ligase activity by binding to the RING domain of RBX1 and inhibiting its interaction with the E2 ubiquitin-conjugating enzyme CDC34. Inhibits RBX1-mediated neddylation of CUL1. Required for normal stability and normal cellular levels of key components of SCF ubiquitin ligase complexes, including FBXW7, RBX1, CUL1, CUL2, CUL3, CUL4A, and thereby contributes to the regulation of CCNE1 and MYC levels. Essential for normal development of the vasculature. Contributes to the regulation of RPS6KB1 phosphorylation. This Mus musculus (Mouse) protein is Glomulin (Glmn).